A 416-amino-acid polypeptide reads, in one-letter code: Enolase (416 aa).

Residue Gln-160 participates in (2R)-2-phosphoglycerate binding. The active-site Proton donor is Glu-204. Mg(2+)-binding residues include Asp-239, Glu-280, and Asp-306. 4 residues coordinate (2R)-2-phosphoglycerate: Lys-331, Arg-360, Ser-361, and Lys-382. Lys-331 (proton acceptor) is an active-site residue.

Belongs to the enolase family. Mg(2+) serves as cofactor.

Its subcellular location is the cytoplasm. It localises to the secreted. The protein resides in the cell surface. It catalyses the reaction (2R)-2-phosphoglycerate = phosphoenolpyruvate + H2O. Its pathway is carbohydrate degradation; glycolysis; pyruvate from D-glyceraldehyde 3-phosphate: step 4/5. In terms of biological role, catalyzes the reversible conversion of 2-phosphoglycerate (2-PG) into phosphoenolpyruvate (PEP). It is essential for the degradation of carbohydrates via glycolysis. The protein is Enolase of Sulfolobus acidocaldarius (strain ATCC 33909 / DSM 639 / JCM 8929 / NBRC 15157 / NCIMB 11770).